Here is a 167-residue protein sequence, read N- to C-terminus: UPF0179 protein Pars_2336 (167 aa).

Belongs to the UPF0179 family.

This is UPF0179 protein Pars_2336 from Pyrobaculum arsenaticum (strain DSM 13514 / JCM 11321 / PZ6).